A 454-amino-acid chain; its full sequence is Exopolyphosphatase PRUNE1 (454 aa).

Met1 is modified (N-acetylmethionine). Positions 28, 30, 106, and 179 each coordinate Mn(2+). Residues 106-108 carry the DHH motif motif; sequence DHH. Residues 394 to 421 form an essential for homodimerization region; the sequence is SLIAGLSQDDEDPPLPPTPMNSLVDECP. The interval 398–421 is disordered; that stretch reads GLSQDDEDPPLPPTPMNSLVDECP. Ser400 carries the phosphoserine modification. A Phosphothreonine modification is found at Thr411. Phosphoserine is present on Ser415.

It belongs to the PPase class C family. Prune subfamily. As to quaternary structure, homooligomer. Able to homodimerize via its C-terminal domain. Interacts with NME1. Interacts with GSK3; at focal adhesion complexes where paxillin and vinculin are colocalized. Interacts with alpha and beta tubulin. The cofactor is Mn(2+).

It localises to the cytoplasm. The protein resides in the nucleus. The protein localises to the cell junction. It is found in the focal adhesion. It catalyses the reaction diphosphate + H2O = 2 phosphate + H(+). Its activity is regulated as follows. Activated by magnesium ions and inhibited by manganese ions. Inhibited by dipyridamole, moderately sensitive to IBMX and inhibited by vinpocetine. Its function is as follows. Phosphodiesterase (PDE) that has higher activity toward cAMP than cGMP, as substrate. Plays a role in cell proliferation, migration and differentiation, and acts as a negative regulator of NME1. Plays a role in the regulation of neurogenesis. Involved in the regulation of microtubule polymerization. This chain is Exopolyphosphatase PRUNE1 (Prune1), found in Rattus norvegicus (Rat).